The chain runs to 217 residues: Putative thymidylate synthase (217 aa).

Cys139 is a catalytic residue.

The protein belongs to the thymidylate synthase family. Archaeal-type ThyA subfamily. Monomer.

It localises to the cytoplasm. Its pathway is pyrimidine metabolism; dTTP biosynthesis. In terms of biological role, may catalyze the biosynthesis of dTMP using an unknown cosubstrate. This Methanosarcina barkeri (strain Fusaro / DSM 804) protein is Putative thymidylate synthase.